The sequence spans 486 residues: UDP-N-acetylmuramate--L-alanine ligase (486 aa).

An ATP-binding site is contributed by Gly-126–Ser-132.

This sequence belongs to the MurCDEF family.

The protein localises to the cytoplasm. The catalysed reaction is UDP-N-acetyl-alpha-D-muramate + L-alanine + ATP = UDP-N-acetyl-alpha-D-muramoyl-L-alanine + ADP + phosphate + H(+). The protein operates within cell wall biogenesis; peptidoglycan biosynthesis. Its function is as follows. Cell wall formation. This is UDP-N-acetylmuramate--L-alanine ligase from Buchnera aphidicola subsp. Baizongia pistaciae (strain Bp).